Here is a 328-residue protein sequence, read N- to C-terminus: NSNEFGNFIAIDDELKLPEDQPEPMTLEHTEPMHSDPLEMEEVEMEDIEGEMILDIDSCDANNSLAVVEYIEDLHAYYRKIEYLGCVSPTYMDEQLDLNERMRAILVDWLIEVHDKFDLMQETLFLTVNLIDRFLAKQNVVRKKLQLVGLVAMLLACKYEEVSVPVVSDLIHIADRAYTRKDILEMEKLMLNTLQYNMSLPTAYVFMRRFLKAAQADKKLELVAFFLVDLSLVEYEMLKFPPSLVAAAAVYTAQCTVSGFKHWNKTCEWHTNYSEDQLLECSMLMVGFHQKAGAGKLTGVHRKYGSAKFSFTAKCEPACFLLENKNQP.

It belongs to the cyclin family. Cyclin AB subfamily. In terms of assembly, interacts with the CDC2 protein kinase to form a serine/threonine kinase holoenzyme complex also known as maturation promoting factor (MPF). The cyclin subunit imparts substrate specificity to the complex. Only expressed in organs with dividing cells.

Its function is as follows. Essential for the control of the cell cycle at the G2/M (mitosis) transition. In Medicago sativa (Alfalfa), this protein is G2/mitotic-specific cyclin-2.